The following is a 122-amino-acid chain: Large ribosomal subunit protein uL14 (122 aa).

It belongs to the universal ribosomal protein uL14 family. As to quaternary structure, part of the 50S ribosomal subunit. Forms a cluster with proteins L3 and L19. In the 70S ribosome, L14 and L19 interact and together make contacts with the 16S rRNA in bridges B5 and B8.

Its function is as follows. Binds to 23S rRNA. Forms part of two intersubunit bridges in the 70S ribosome. The polypeptide is Large ribosomal subunit protein uL14 (Cytophaga hutchinsonii (strain ATCC 33406 / DSM 1761 / CIP 103989 / NBRC 15051 / NCIMB 9469 / D465)).